The chain runs to 863 residues: MGCVKLVFFMLYVFLFQLVSSSSLPHLCPEDQALALLQFKNMFTVNPNAFHYCPDITGREIQSYPRTLSWNKSTSCCSWDGVHCDETTGQVIALDLRCSQLQGKFHSNSSLFQLSNLKRLDLSNNNFIGSLISPKFGEFSDLTHLDLSDSSFTGVIPSEISHLSKLHVLLIGDQYGLSIVPHNFEPLLKNLTQLRELNLYEVNLSSTVPSNFSSHLTTLQLSGTGLRGLLPERVFHLSDLEFLDLSYNSQLMVRFPTTKWNSSASLMKLYVHSVNIADRIPESFSHLTSLHELDMGYTNLSGPIPKPLWNLTNIESLDLRYNHLEGPIPQLPIFEKLKKLSLFRNDNLDGGLEFLSFNTQLERLDLSSNSLTGPIPSNISGLQNLECLYLSSNHLNGSIPSWIFSLPSLVELDLSNNTFSGKIQEFKSKTLSAVTLKQNKLKGRIPNSLLNQKNLQLLLLSHNNISGHISSAICNLKTLILLDLGSNNLEGTIPQCVVERNEYLSHLDLSKNRLSGTINTTFSVGNILRVISLHGNKLTGKVPRSLINCKYLALLDLGNNQLNDTFPNWLGHLSQLKILSLRSNKLHGPIKSSGNTNLFTRLQIMDLSYNGFSGNLPESILGNLQAMKKIDESTRTPEYISDPYDFYYNYLTTITTKGQDYDSVRILDSNMIINLSKNRFEGRIPSIIGDLVGLRTLNLSHNVLEGHIPASFQNLSVLESLDLSSNKISGEIPQQLASLTFLEVLNLSHNHLVGCIPKGKQFDSFGNTSYQGNDGLCGFPLSKLCGGDDQVTTPAELDQEEEEEDSPMISWQGVLVGYGCGLVIGLSVIYIMWSTQYPAWFSRMHLKLEQIVTTRMKKHKKRY.

Residues 1–21 (MGCVKLVFFMLYVFLFQLVSS) form the signal peptide. The Extracellular portion of the chain corresponds to 22 to 812 (SSLPHLCPED…EEDSPMISWQ (791 aa)). The tract at residues 24-90 (LPHLCPEDQA…GVHCDETTGQ (67 aa)) is N-cap. 2 N-linked (GlcNAc...) asparagine glycosylation sites follow: Asn-71 and Asn-108. An LRR 1; degenerate repeat occupies 91–114 (VIALDLRCSQLQGKFHSNSSLFQL). LRR repeat units follow at residues 115–138 (SNLK…KFGE) and 140–163 (SDLT…ISHL). One copy of the LRR 4; degenerate repeat lies at 164–190 (SKLHVLLIGDQYGLSIVPHNFEPLLKN). Asn-190, Asn-203, and Asn-211 each carry an N-linked (GlcNAc...) asparagine glycan. 6 LRR repeats span residues 191–213 (LTQL…SNFS), 214–237 (SHLT…VFHL), 240–262 (LEFL…KWNS), 264–286 (ASLM…SFSH), 287–311 (LTSL…LWNL), and 312–336 (TNIE…IFEK). N-linked (GlcNAc...) asparagine glycosylation is present at Asn-261. 2 N-linked (GlcNAc...) asparagine glycosylation sites follow: Asn-299 and Asn-310. An LRR 11; degenerate repeat occupies 337–357 (LKKLSLFRNDNLDGGLEFLSF). LRR repeat units follow at residues 358-382 (NTQL…ISGL), 383-406 (QNLE…IFSL), 408-428 (SLVE…EFKS), 429-452 (KTLS…LLNQ), 454-476 (NLQL…ICNL), 477-500 (KTLI…VVER), 502-524 (EYLS…TFSV), 525-549 (GNIL…LINC), 551-572 (YLAL…WLGH), 573-597 (LSQL…GNTN), 599-623 (FTRL…ILGN), 667-690 (LDSN…IIGD), 691-714 (LVGL…SFQN), 715-739 (LSVL…LASL), and 741-759 (FLEV…IPKG). 3 N-linked (GlcNAc...) asparagine glycosylation sites follow: Asn-378, Asn-396, and Asn-416. Residue Asn-464 is glycosylated (N-linked (GlcNAc...) asparagine). The N-linked (GlcNAc...) asparagine glycan is linked to Asn-519. N-linked (GlcNAc...) asparagine glycosylation is present at Asn-563. 3 N-linked (GlcNAc...) asparagine glycosylation sites follow: Asn-674, Asn-698, and Asn-714. N-linked (GlcNAc...) asparagine glycans are attached at residues Asn-746 and Asn-767. Residues 760–812 (KQFDSFGNTSYQGNDGLCGFPLSKLCGGDDQVTTPAELDQEEEEEDSPMISWQ) are C-cap/acidic domain. The chain crosses the membrane as a helical span at residues 813-833 (GVLVGYGCGLVIGLSVIYIMW). Residues 834–863 (STQYPAWFSRMHLKLEQIVTTRMKKHKKRY) lie on the Cytoplasmic side of the membrane.

The protein belongs to the RLP family.

The protein resides in the cell membrane. Involved in plant defense. Confers resistance to the fungal pathogen C.fulvum through recognition of the AVR9 elicitor protein. The chain is Receptor-like protein 9DC3 from Solanum pimpinellifolium (Currant tomato).